The primary structure comprises 261 residues: Large ribosomal subunit protein uL10m (261 aa).

Residues 1–28 (MAAAVAGMLRGGLLPQAGRLPTLQTVRY) constitute a mitochondrion transit peptide. The disordered stretch occupies residues 242–261 (EKDSVMSANGKPDPDTVPDS).

This sequence belongs to the universal ribosomal protein uL10 family. As to quaternary structure, component of the mitochondrial large ribosomal subunit (mt-LSU). Mature mammalian 55S mitochondrial ribosomes consist of a small (28S) and a large (39S) subunit. The 28S small subunit contains a 12S ribosomal RNA (12S mt-rRNA) and 30 different proteins. The 39S large subunit contains a 16S rRNA (16S mt-rRNA), a copy of mitochondrial valine transfer RNA (mt-tRNA(Val)), which plays an integral structural role, and 52 different proteins. uL10m contributes a single cysteine residue to a zinc-binding site with mL66.

It localises to the mitochondrion. The protein is Large ribosomal subunit protein uL10m (MRPL10) of Homo sapiens (Human).